We begin with the raw amino-acid sequence, 358 residues long: Ganglioside-induced differentiation-associated protein 1 (358 aa).

In terms of domain architecture, GST N-terminal spans 24–105 (VKLILYHWTH…YLEQTFLDEK (82 aa)). Glycyl lysine isopeptide (Lys-Gly) (interchain with G-Cter in ubiquitin) cross-links involve residues lysine 50, lysine 172, lysine 173, lysine 188, and lysine 190. One can recognise a GST C-terminal domain in the interval 153 to 309 (PAYATTRIRS…LISAVLPTAF (157 aa)). Lysine 203 carries the N6-acetyllysine; alternate modification. A Glycyl lysine isopeptide (Lys-Gly) (interchain with G-Cter in ubiquitin); alternate cross-link involves residue lysine 203. Residues lysine 206, lysine 207, and lysine 214 each participate in a glycyl lysine isopeptide (Lys-Gly) (interchain with G-Cter in ubiquitin) cross-link. Transmembrane regions (helical) follow at residues 292 to 312 (VLGHVNNILISAVLPTAFRVA) and 320 to 340 (LGTTLVVGLLAGMGYFAFMLF). A required for mitochondrial localization region spans residues 320–358 (LGTTLVVGLLAGMGYFAFMLFRKRLGSMILALRPRPNYF).

This sequence belongs to the GST superfamily. Homodimer. Ubiquitinated by PRKN during mitophagy, leading to its degradation and enhancement of mitophagy. Deubiquitinated by USP30.

It is found in the mitochondrion outer membrane. It localises to the cytoplasm. Functionally, regulates the mitochondrial network by promoting mitochondrial fission. This is Ganglioside-induced differentiation-associated protein 1 (GDAP1) from Bos taurus (Bovine).